A 610-amino-acid chain; its full sequence is Elongation factor 4 (610 aa).

The tr-type G domain occupies 11-193; sequence EKIRNFSIIA…QIVEKVPAPS (183 aa). GTP contacts are provided by residues 23-28 and 140-143; these read DHGKST and NKID.

This sequence belongs to the TRAFAC class translation factor GTPase superfamily. Classic translation factor GTPase family. LepA subfamily.

Its subcellular location is the cell membrane. It catalyses the reaction GTP + H2O = GDP + phosphate + H(+). Functionally, required for accurate and efficient protein synthesis under certain stress conditions. May act as a fidelity factor of the translation reaction, by catalyzing a one-codon backward translocation of tRNAs on improperly translocated ribosomes. Back-translocation proceeds from a post-translocation (POST) complex to a pre-translocation (PRE) complex, thus giving elongation factor G a second chance to translocate the tRNAs correctly. Binds to ribosomes in a GTP-dependent manner. The protein is Elongation factor 4 of Streptococcus uberis (strain ATCC BAA-854 / 0140J).